Reading from the N-terminus, the 391-residue chain is Terminal nucleotidyltransferase 5C (391 aa).

This sequence belongs to the TENT family. Interacts with BCCIP and PABPC1; the interaction has no effect on TENT5C poly(A) polymerase function. Interacts with PLK4; this interaction leads to the TENT5C recruitment into the centrosome.

It is found in the nucleus. The protein localises to the cytoplasm. Its subcellular location is the cytoskeleton. It localises to the microtubule organizing center. The protein resides in the centrosome. It carries out the reaction RNA(n) + ATP = RNA(n)-3'-adenine ribonucleotide + diphosphate. In terms of biological role, catalyzes the transfer of one adenosine molecule from an ATP to an mRNA poly(A) tail bearing a 3'-OH terminal group and enhances mRNA stability and gene expression. Can also elongate RNA oligos ending with uridine molecule, provided that the sequence is adenosine-rich. Mainly targets mRNAs encoding endoplasmic reticulum-targeted protein. This is Terminal nucleotidyltransferase 5C from Rattus norvegicus (Rat).